The sequence spans 119 residues: Phosphoribosyl-AMP cyclohydrolase (119 aa).

Position 77 (Asp77) interacts with Mg(2+). Cys78 is a binding site for Zn(2+). Asp79 and Asp81 together coordinate Mg(2+). 2 residues coordinate Zn(2+): Cys94 and Cys101.

It belongs to the PRA-CH family. Homodimer. Mg(2+) is required as a cofactor. The cofactor is Zn(2+).

Its subcellular location is the cytoplasm. The catalysed reaction is 1-(5-phospho-beta-D-ribosyl)-5'-AMP + H2O = 1-(5-phospho-beta-D-ribosyl)-5-[(5-phospho-beta-D-ribosylamino)methylideneamino]imidazole-4-carboxamide. It participates in amino-acid biosynthesis; L-histidine biosynthesis; L-histidine from 5-phospho-alpha-D-ribose 1-diphosphate: step 3/9. Functionally, catalyzes the hydrolysis of the adenine ring of phosphoribosyl-AMP. This is Phosphoribosyl-AMP cyclohydrolase from Cereibacter sphaeroides (strain ATCC 17025 / ATH 2.4.3) (Rhodobacter sphaeroides).